The following is a 371-amino-acid chain: 4-hydroxy-3-methylbut-2-en-1-yl diphosphate synthase (flavodoxin) (371 aa).

4 residues coordinate [4Fe-4S] cluster: Cys270, Cys273, Cys305, and Glu312.

Belongs to the IspG family. [4Fe-4S] cluster is required as a cofactor.

It catalyses the reaction (2E)-4-hydroxy-3-methylbut-2-enyl diphosphate + oxidized [flavodoxin] + H2O + 2 H(+) = 2-C-methyl-D-erythritol 2,4-cyclic diphosphate + reduced [flavodoxin]. It participates in isoprenoid biosynthesis; isopentenyl diphosphate biosynthesis via DXP pathway; isopentenyl diphosphate from 1-deoxy-D-xylulose 5-phosphate: step 5/6. In terms of biological role, converts 2C-methyl-D-erythritol 2,4-cyclodiphosphate (ME-2,4cPP) into 1-hydroxy-2-methyl-2-(E)-butenyl 4-diphosphate. The chain is 4-hydroxy-3-methylbut-2-en-1-yl diphosphate synthase (flavodoxin) from Shewanella halifaxensis (strain HAW-EB4).